The following is a 377-amino-acid chain: Guanine nucleotide-binding protein subunit beta (377 aa).

WD repeat units lie at residues 63–93 (GHTGKVYSLDWTPEKNRIVSASQDGRLIVWN), 105–135 (LPCAWVMTCAFSPSGQSVACGGLDSACSIFN), 154–185 (GHKGYVSSCQYVPDEDTHLITSSGDQTCVLWD), 202–233 (GHTADVLSVSISSSNPKLFVSGSCDTTARLWD), 246–276 (GHESDVNTVKFFPDGNRFGTGSDDGSCRLFD), 293–323 (GDIPHVTSMAFSISGRLLFVGYSNGDCYVWD), and 339–369 (SHEGRISCLGLSADGSALCTGSWDTNLKIWA).

Belongs to the WD repeat G protein beta family. In terms of assembly, g proteins are composed of 3 units, alpha, beta and gamma.

In terms of biological role, guanine nucleotide-binding proteins (G proteins) are involved as a modulator or transducer in various transmembrane signaling systems. The beta and gamma chains are required for the GTPase activity, for replacement of GDP by GTP, and for G protein-effector interaction. This Solanum tuberosum (Potato) protein is Guanine nucleotide-binding protein subunit beta (GB1).